Here is a 135-residue protein sequence, read N- to C-terminus: Sex-regulated protein janus-A (135 aa).

Position 37 (Lys37) interacts with substrate. The Proton acceptor role is filled by His63. 104–106 (SQG) serves as a coordination point for substrate.

Belongs to the janus family.

JanA and janB regulate somatic sex differentiation. The polypeptide is Sex-regulated protein janus-A (janA) (Drosophila erecta (Fruit fly)).